A 142-amino-acid polypeptide reads, in one-letter code: Phosphoribosyl-AMP cyclohydrolase (142 aa).

Mg(2+) is bound at residue aspartate 92. Zn(2+) is bound at residue cysteine 93. 2 residues coordinate Mg(2+): aspartate 94 and aspartate 96. Positions 109 and 116 each coordinate Zn(2+).

The protein belongs to the PRA-CH family. As to quaternary structure, homodimer. It depends on Mg(2+) as a cofactor. Zn(2+) serves as cofactor.

Its subcellular location is the cytoplasm. The catalysed reaction is 1-(5-phospho-beta-D-ribosyl)-5'-AMP + H2O = 1-(5-phospho-beta-D-ribosyl)-5-[(5-phospho-beta-D-ribosylamino)methylideneamino]imidazole-4-carboxamide. The protein operates within amino-acid biosynthesis; L-histidine biosynthesis; L-histidine from 5-phospho-alpha-D-ribose 1-diphosphate: step 3/9. In terms of biological role, catalyzes the hydrolysis of the adenine ring of phosphoribosyl-AMP. This is Phosphoribosyl-AMP cyclohydrolase from Alcanivorax borkumensis (strain ATCC 700651 / DSM 11573 / NCIMB 13689 / SK2).